Here is a 486-residue protein sequence, read N- to C-terminus: MGKFVEKLEKAIKGYTFDDVLLIPQATEVEPKDVDVSTRITPNVKLNIPILSAAMDTVTEWEMAVAMAREGGLGVIHRNMGIEEQVEQVKRVKRAERLIVEDVITIAPDETVDFALFLMEKHGIDGLPVVEDEKVVGIITKKDIAAREGKLVKELMTKEVITVPESIEVEEALKIMIENRIDRLPVVDERGKLVGLITMSDLVARKKYKNAVRDENGELLVAAAVSPFDIKRAIELDKAGVDVIVVDTAHAHNLKAIKSMKEMRQKVDADFIVGNIANPKAVDDLTFADAVKVGIGPGSICTTRIVAGVGVPQITAVAMVADRAQEYGLYVIADGGIRYSGDIVKAIAAGADAVMLGNLLAGTKEAPGKEVIINGRKYKQYRGMGSLGAMMKGGAERYYQGGYMKTRKFVPEGVEGVVPYRGTVSEVLYQLVGGLKAGMGYVGARNIRELKEKGEFVIITHAGIKESHPHDIIITNEAPNYPLEKF.

CBS domains are found at residues Ile-99–Glu-154 and Met-156–Glu-215. NAD(+) contacts are provided by residues Asp-247 and Gly-294 to Gly-296. 2 residues coordinate K(+): Gly-296 and Gly-298. IMP is bound at residue Ser-299. Cys-301 provides a ligand contact to K(+). The Thioimidate intermediate role is filled by Cys-301. Residues Asp-334–Gly-336, Gly-357–Asn-358, and Tyr-381–Gly-385 each bind IMP. The Proton acceptor role is filled by Arg-397. IMP is bound at residue Glu-412. K(+)-binding residues include Glu-466, Ser-467, and His-468.

Belongs to the IMPDH/GMPR family. Homotetramer. K(+) serves as cofactor.

The enzyme catalyses IMP + NAD(+) + H2O = XMP + NADH + H(+). It functions in the pathway purine metabolism; XMP biosynthesis via de novo pathway; XMP from IMP: step 1/1. With respect to regulation, mycophenolic acid (MPA) is a non-competitive inhibitor that prevents formation of the closed enzyme conformation by binding to the same site as the amobile flap. In contrast, mizoribine monophosphate (MZP) is a competitive inhibitor that induces the closed conformation. MPA is a potent inhibitor of mammalian IMPDHs but a poor inhibitor of the bacterial enzymes. MZP is a more potent inhibitor of bacterial IMPDH. Functionally, catalyzes the conversion of inosine 5'-phosphate (IMP) to xanthosine 5'-phosphate (XMP), the first committed and rate-limiting step in the de novo synthesis of guanine nucleotides, and therefore plays an important role in the regulation of cell growth. The polypeptide is Inosine-5'-monophosphate dehydrogenase (Pyrococcus horikoshii (strain ATCC 700860 / DSM 12428 / JCM 9974 / NBRC 100139 / OT-3)).